Reading from the N-terminus, the 696-residue chain is Elongation factor G (696 aa).

In terms of domain architecture, tr-type G spans 8-288 (EDYRNFGIMA…AVVDFLPSPI (281 aa)). GTP is bound by residues 17–24 (AHIDAGKT), 86–90 (DTPGH), and 140–143 (NKMD).

The protein belongs to the TRAFAC class translation factor GTPase superfamily. Classic translation factor GTPase family. EF-G/EF-2 subfamily.

It is found in the cytoplasm. Its function is as follows. Catalyzes the GTP-dependent ribosomal translocation step during translation elongation. During this step, the ribosome changes from the pre-translocational (PRE) to the post-translocational (POST) state as the newly formed A-site-bound peptidyl-tRNA and P-site-bound deacylated tRNA move to the P and E sites, respectively. Catalyzes the coordinated movement of the two tRNA molecules, the mRNA and conformational changes in the ribosome. The chain is Elongation factor G from Chelativorans sp. (strain BNC1).